The following is a 133-amino-acid chain: MKKNPSSPAGCPCGKPRAYPDCCGRWHAGALFLQAPDAESLMRSRYSAFVLDQLDYLLQTWHPDTRPSELEPNAADVKWLGLQIKASQQQDDTHATVEFVARLRQAGRATRLHELSRFVKEEQRWYYVDGDIR.

The protein belongs to the UPF0225 family.

The chain is UPF0225 protein BP2036 from Bordetella pertussis (strain Tohama I / ATCC BAA-589 / NCTC 13251).